We begin with the raw amino-acid sequence, 311 residues long: CD-NTase-associated protein 6 (311 aa).

ATP contacts are provided by residues 84–89 and 215–216; these read GSGKTE and RR.

Belongs to the AAA ATPase family. In terms of assembly, homohexamer. Forms a 1:1:6 CdnC:Cap7:Cap6 complex.

Regulates complex assembly in a CBASS antivirus system. CBASS (cyclic oligonucleotide-based antiphage signaling system) provides immunity against bacteriophage. The CD-NTase protein synthesizes cyclic nucleotides in response to infection; these serve as specific second messenger signals. The signals activate a diverse range of effectors, leading to bacterial cell death and thus abortive phage infection. A type III-C(AAA) CBASS system. Functionally, binds and disassembles an active CdnC:Cap7 (Cap7 is also called HORMA) complex, inhibiting the complex's ability to synthesize cyclic nucleotide second messengers. An AAA+-ATPase remodeler, in the absence of foreign threat Cap6 (also called Trip13) probably maintains the Cap7 protein in its open, inactive state. Once activated (presumably by a bacteriophage protein) Cap7 binds to and activates its cognate CD-NTase (CdnC in this bacteria) to synthesize cAAA, a cyclic nucleotide second messenger. cAAA activates the NucC endonuclease which degrades all DNA in the infected cell, causing cell death and abortive phage infection. Its function is as follows. Protects E.coli strain JP313 against bacteriophage lambda cI- infection. When the cdnC-cap7-cap6-nucC operon is transformed into a susceptible E.coli strain it confers bacteriophage lambda cI- immunity. Mutations in the sensor (Cap7 also called HORMA) or effector proteins (CdnC, NucC) but not the disassembly protein (Cap6 also called Trip13) no longer confer immunity. The presence of the intact operon leads to culture collapse and cell death, which occurs before the phage has finished its replication cycle, thus protecting non-infected bacteria by aborting the phage infection and preventing its propagation. The protein is CD-NTase-associated protein 6 of Escherichia coli (strain MS 115-1).